A 215-amino-acid chain; its full sequence is Peroxiredoxin (215 aa).

The region spanning 3–158 (PLLGDNFPEI…ILRAVKALQV (156 aa)) is the Thioredoxin domain. Cys45 (cysteine sulfenic acid (-SOH) intermediate) is an active-site residue. Arg121 serves as a coordination point for substrate. Cys205 and Cys211 are disulfide-bonded.

It belongs to the peroxiredoxin family. Prx6 subfamily. In terms of assembly, homodecamer. Pentamer of dimers that assemble into a ring structure.

The protein resides in the cytoplasm. It catalyses the reaction a hydroperoxide + [thioredoxin]-dithiol = an alcohol + [thioredoxin]-disulfide + H2O. Thiol-specific peroxidase that catalyzes the reduction of hydrogen peroxide and organic hydroperoxides to water and alcohols, respectively. Plays a role in cell protection against oxidative stress by detoxifying peroxides. The protein is Peroxiredoxin of Archaeoglobus fulgidus (strain ATCC 49558 / DSM 4304 / JCM 9628 / NBRC 100126 / VC-16).